The primary structure comprises 477 residues: Tripartite motif-containing protein 72 (477 aa).

Positions 14, 17, 29, 31, 34, 37, 53, 56, 86, 89, 97, 100, 105, 108, 114, and 117 each coordinate Zn(2+). An RING-type zinc finger spans residues 14-57 (CPLCLQLFDAPVTAECGHSFCRACLSRVAGEPAADGTVNCPCCQ). A B box-type zinc finger spans residues 81 to 122 (VPQGHCEEHLDPLSIYCEQDRVLVCGVCASLGSHRGHRLLPA). Residues 135 to 232 (QQKLQLQEAS…EKVLEEVADK (98 aa)) are a coiled coil. Position 255 is a phosphoserine (serine 255). The B30.2/SPRY domain maps to 271–475 (DFKFQVWRKM…PLLLVGPDGQ (205 aa)).

Belongs to the TRIM/RBCC family. As to quaternary structure, homodimer. Homooligomer; disulfide-linked. Oligomerizes on the phospholipid membrane. Interacts with DYSF and CAV3. Post-translationally, disulfide bond formation at Cys-242 occurs in case of membrane damage that cause the entry of the oxidized milieu of the extracellular space, resulting in homooligomerization. In terms of tissue distribution, muscle-specific.

Its subcellular location is the cell membrane. It localises to the sarcolemma. The protein localises to the cytoplasmic vesicle membrane. It catalyses the reaction S-ubiquitinyl-[E2 ubiquitin-conjugating enzyme]-L-cysteine + [acceptor protein]-L-lysine = [E2 ubiquitin-conjugating enzyme]-L-cysteine + N(6)-ubiquitinyl-[acceptor protein]-L-lysine.. It functions in the pathway protein modification; protein ubiquitination. With respect to regulation, specifically binds phosphatidylserine. The binding to phospholipids enhances ubiquitination activity. Functionally, muscle-specific E3 ubiquitin-protein ligase that plays a central role in cell membrane repair by nucleating the assembly of the repair machinery at injury sites. Its ubiquitination activity is mediated by E2 ubiquitin-conjugating enzymes UBE2D1, UBE2D2 and UBE2D3. Acts as a sensor of oxidation: upon membrane damage, entry of extracellular oxidative environment results in disulfide bond formation and homooligomerization at the injury site. This oligomerization acts as a nucleation site for recruitment of TRIM72-containing vesicles to the injury site, leading to membrane patch formation. Probably acts upstream of the Ca(2+)-dependent membrane resealing process. Required for transport of DYSF to sites of cell injury during repair patch formation. Regulates membrane budding and exocytosis. May be involved in the regulation of the mobility of KCNB1-containing endocytic vesicles. This Oryctolagus cuniculus (Rabbit) protein is Tripartite motif-containing protein 72.